Consider the following 239-residue polypeptide: tRNA1(Val) (adenine(37)-N6)-methyltransferase (239 aa).

Belongs to the methyltransferase superfamily. tRNA (adenine-N(6)-)-methyltransferase family.

Its subcellular location is the cytoplasm. It catalyses the reaction adenosine(37) in tRNA1(Val) + S-adenosyl-L-methionine = N(6)-methyladenosine(37) in tRNA1(Val) + S-adenosyl-L-homocysteine + H(+). Functionally, specifically methylates the adenine in position 37 of tRNA(1)(Val) (anticodon cmo5UAC). In Trichodesmium erythraeum (strain IMS101), this protein is tRNA1(Val) (adenine(37)-N6)-methyltransferase.